The chain runs to 301 residues: tRNA pseudouridine synthase B (301 aa).

Catalysis depends on D38, which acts as the Nucleophile.

It belongs to the pseudouridine synthase TruB family. Type 1 subfamily.

It catalyses the reaction uridine(55) in tRNA = pseudouridine(55) in tRNA. Its function is as follows. Responsible for synthesis of pseudouridine from uracil-55 in the psi GC loop of transfer RNAs. This chain is tRNA pseudouridine synthase B, found in Limosilactobacillus reuteri (strain DSM 20016) (Lactobacillus reuteri).